Consider the following 376-residue polypeptide: uncharacterized protein (376 aa).

Over 1–280 (MPIPIIAHIA…RTPGFRRVVS (280 aa)) the chain is Lumenal. NADP(+)-binding residues include Ile66, Asp115, Arg178, Lys233, Val270, and Thr272. Residue Lys233 is the Lowers pKa of active site Tyr of the active site. The chain crosses the membrane as a helical span at residues 281–301 (FGKVWGLFLYLLLWPFWWLLL). At 302–376 (KGTIHGAQSF…KKKKIKKSKK (75 aa)) the chain is on the cytoplasmic side.

Belongs to the short-chain dehydrogenases/reductases (SDR) family.

The protein resides in the cytoplasm. Its subcellular location is the endoplasmic reticulum membrane. Its function is as follows. May be involved in lipid metabolism. This is an uncharacterized protein from Schizosaccharomyces pombe (strain 972 / ATCC 24843) (Fission yeast).